The sequence spans 255 residues: DNA repair protein RecO (255 aa).

The protein belongs to the RecO family.

Its function is as follows. Involved in DNA repair and RecF pathway recombination. The polypeptide is DNA repair protein RecO (Listeria monocytogenes serotype 4a (strain HCC23)).